The sequence spans 117 residues: Photosystem II reaction center Psb28 protein (117 aa).

It belongs to the Psb28 family. Part of the photosystem II complex.

The protein resides in the cellular thylakoid membrane. This Prochlorococcus marinus (strain MIT 9515) protein is Photosystem II reaction center Psb28 protein.